Consider the following 672-residue polypeptide: Acetyl-coenzyme A synthetase (672 aa).

CoA contacts are provided by residues 205–208 (RGGK) and T325. ATP contacts are provided by residues 401–403 (GEP), 425–430 (DTYWQT), D516, and R531. S539 is a binding site for CoA. An ATP-binding site is contributed by R542. Residue R600 participates in CoA binding.

This sequence belongs to the ATP-dependent AMP-binding enzyme family.

It carries out the reaction acetate + ATP + CoA = acetyl-CoA + AMP + diphosphate. This chain is Acetyl-coenzyme A synthetase (facA), found in Phycomyces blakesleeanus (strain ATCC 8743b / DSM 1359 / FGSC 10004 / NBRC 33097 / NRRL 1555).